A 266-amino-acid chain; its full sequence is Glucosamine-6-phosphate deaminase (266 aa).

The active-site Proton acceptor; for enolization step is the D72. Catalysis depends on D141, which acts as the For ring-opening step. The active-site Proton acceptor; for ring-opening step is H143. E148 acts as the For ring-opening step in catalysis.

It belongs to the glucosamine/galactosamine-6-phosphate isomerase family. NagB subfamily. Homohexamer.

The enzyme catalyses alpha-D-glucosamine 6-phosphate + H2O = beta-D-fructose 6-phosphate + NH4(+). Its pathway is amino-sugar metabolism; N-acetylneuraminate degradation; D-fructose 6-phosphate from N-acetylneuraminate: step 5/5. Its activity is regulated as follows. Allosterically activated by N-acetylglucosamine 6-phosphate (GlcNAc6P). Its function is as follows. Catalyzes the reversible isomerization-deamination of glucosamine 6-phosphate (GlcN6P) to form fructose 6-phosphate (Fru6P) and ammonium ion. The protein is Glucosamine-6-phosphate deaminase of Vibrio campbellii (strain ATCC BAA-1116).